Here is a 320-residue protein sequence, read N- to C-terminus: MSESSTGAGLGPGIVVIDKPSGMTSHDVVARCRRIFCTRRVGHAGTLDPMATGVLVLGVDRATKILGLLAGASKEYVATIRLGQTTSTEDAEGELLQCVSARHVTDEAIATAIGRLRGDIKQVPSAVSAIKVDGRRAYRLVREGHVVELQARPVRIDRFEVLAVRPGPEVGLADVIDLDVEVECSSGTYIRALARDLGDAFGVGGHLTSLRRTRVGRFELDQAWSLEDLAELPRLSRTLDETCLLMFPRRDLTVSEVEATSNGRPISSAGIDGIYAASDADGRVIALLRDEGPRTKSVVVLHPVFVRVSIGRGIVGVIEA.

Aspartate 48 (nucleophile) is an active-site residue.

Belongs to the pseudouridine synthase TruB family. Type 1 subfamily.

The catalysed reaction is uridine(55) in tRNA = pseudouridine(55) in tRNA. Its function is as follows. Responsible for synthesis of pseudouridine from uracil-55 in the psi GC loop of transfer RNAs. This Mycobacterium leprae (strain TN) protein is tRNA pseudouridine synthase B.